The following is a 141-amino-acid chain: Small ribosomal subunit protein uS12 (141 aa).

Aspartate 102 is modified (3-methylthioaspartic acid). The segment at glycine 115–lysine 141 is disordered.

This sequence belongs to the universal ribosomal protein uS12 family. Part of the 30S ribosomal subunit. Contacts proteins S8 and S17. May interact with IF1 in the 30S initiation complex.

Its function is as follows. With S4 and S5 plays an important role in translational accuracy. In terms of biological role, interacts with and stabilizes bases of the 16S rRNA that are involved in tRNA selection in the A site and with the mRNA backbone. Located at the interface of the 30S and 50S subunits, it traverses the body of the 30S subunit contacting proteins on the other side and probably holding the rRNA structure together. The combined cluster of proteins S8, S12 and S17 appears to hold together the shoulder and platform of the 30S subunit. In Ureaplasma parvum serovar 3 (strain ATCC 27815 / 27 / NCTC 11736), this protein is Small ribosomal subunit protein uS12.